The chain runs to 365 residues: Ubiquitin carboxyl-terminal hydrolase 4 (365 aa).

Gly-2 is lipidated: N-myristoyl glycine. The USP domain maps to 23–362 (FGFENFGNTC…HGYILLYESL (340 aa)). The active-site Nucleophile is the Cys-32. Residues 81–98 (KKKTGVIAPKRFVQRLKK) carry the Bipartite nuclear localization signal motif. His-310 (proton acceptor) is an active-site residue.

The protein belongs to the peptidase C19 family. As to expression, constitutively and ubiquitously expressed.

The protein localises to the nucleus. It carries out the reaction Thiol-dependent hydrolysis of ester, thioester, amide, peptide and isopeptide bonds formed by the C-terminal Gly of ubiquitin (a 76-residue protein attached to proteins as an intracellular targeting signal).. Functionally, recognizes and hydrolyzes the peptide bond at the C-terminal Gly of ubiquitin. Involved in the processing of poly-ubiquitin precursors as well as that of ubiquitinated proteins. Required for the correct development of pollen. This is Ubiquitin carboxyl-terminal hydrolase 4 (UBP4) from Arabidopsis thaliana (Mouse-ear cress).